Here is a 153-residue protein sequence, read N- to C-terminus: Lipoprotein signal peptidase (153 aa).

Helical transmembrane passes span 11 to 31 (ILIL…SLFV), 39 to 59 (DCID…FAFL), and 68 to 88 (LVLV…CYAI). Residues Asp-112 and Asp-129 contribute to the active site. Residues 122–142 (FAVFNFADVMIDVAVVWILLL) traverse the membrane as a helical segment.

This sequence belongs to the peptidase A8 family.

The protein localises to the cell inner membrane. It carries out the reaction Release of signal peptides from bacterial membrane prolipoproteins. Hydrolyzes -Xaa-Yaa-Zaa-|-(S,diacylglyceryl)Cys-, in which Xaa is hydrophobic (preferably Leu), and Yaa (Ala or Ser) and Zaa (Gly or Ala) have small, neutral side chains.. Its pathway is protein modification; lipoprotein biosynthesis (signal peptide cleavage). Functionally, this protein specifically catalyzes the removal of signal peptides from prolipoproteins. The polypeptide is Lipoprotein signal peptidase (Sulfurimonas denitrificans (strain ATCC 33889 / DSM 1251) (Thiomicrospira denitrificans (strain ATCC 33889 / DSM 1251))).